Here is an 807-residue protein sequence, read N- to C-terminus: Lysyl oxidase homolog 3B (807 aa).

Residues 1–24 (MELHQWCRHIIVFLLNVWIPSCFA) form the signal peptide. 5 consecutive SRCR domains span residues 49-150 (FRLS…VICK), 175-288 (VRLR…VSCV), 309-409 (TRLK…VRCN), 419-470 (VRIL…LGYA), and 476-579 (VRLS…VICS). 9 cysteine pairs are disulfide-bonded: cysteine 75–cysteine 139, cysteine 88–cysteine 149, cysteine 119–cysteine 129, cysteine 207–cysteine 277, cysteine 220–cysteine 287, cysteine 254–cysteine 264, cysteine 334–cysteine 398, cysteine 347–cysteine 408, and cysteine 378–cysteine 388. Asparagine 272 carries N-linked (GlcNAc...) asparagine glycosylation. Asparagine 392 is a glycosylation site (N-linked (GlcNAc...) asparagine). Cystine bridges form between cysteine 514–cysteine 578 and cysteine 547–cysteine 557. N-linked (GlcNAc...) asparagine glycosylation is present at asparagine 536. N-linked (GlcNAc...) asparagine glycosylation occurs at asparagine 679. Residues 688 to 724 (KASFCLEDTDCDEGVSKRYKCANFGEQGITVGCWDLY) constitute a cross-link (lysine tyrosylquinone (Lys-Tyr)). Residue tyrosine 724 is modified to 2',4',5'-topaquinone.

Belongs to the lysyl oxidase family. It depends on Cu cation as a cofactor. The cofactor is lysine tyrosylquinone residue. In terms of processing, the lysine tyrosylquinone cross-link (LTQ) is generated by condensation of the epsilon-amino group of a lysine with a topaquinone produced by oxidation of tyrosine.

The protein localises to the secreted. The protein resides in the extracellular space. It is found in the cytoplasm. Its subcellular location is the nucleus. It catalyses the reaction L-lysyl-[protein] + O2 + H2O = (S)-2-amino-6-oxohexanoyl-[protein] + H2O2 + NH4(+). The enzyme catalyses N(6)-acetyl-L-lysyl-[protein] + O2 + H2O = acetamide + (S)-2-amino-6-oxohexanoyl-[protein] + H2O2. Its function is as follows. Protein-lysine 6-oxidase that mediates the oxidation of peptidyl lysine residues to allysine in target proteins. Catalyzes the post-translational oxidative deamination of peptidyl lysine residues in precursors of elastin and different types of collagens, a prerequisite in the formation of cross-links between collagens and elastin. Can mediate oxidation of lysine residues that are acetylated. Also able to catalyze deacetylation of lysine residues. Required for maturation of neural crest derived cartilage elements. The protein is Lysyl oxidase homolog 3B of Danio rerio (Zebrafish).